Reading from the N-terminus, the 90-residue chain is Elongation factor 1-beta (90 aa).

This sequence belongs to the EF-1-beta/EF-1-delta family.

Functionally, promotes the exchange of GDP for GTP in EF-1-alpha/GDP, thus allowing the regeneration of EF-1-alpha/GTP that could then be used to form the ternary complex EF-1-alpha/GTP/AAtRNA. This chain is Elongation factor 1-beta (ef1b), found in Aeropyrum pernix (strain ATCC 700893 / DSM 11879 / JCM 9820 / NBRC 100138 / K1).